The chain runs to 303 residues: Growth/differentiation factor 15 (303 aa).

An N-terminal signal peptide occupies residues 1–30; sequence MALRALHAQPTGGPQLRFLLFLLLLLLLLS. Positions 31–188 are excised as a propeptide; the sequence is WPSQGDALAL…LRSAAGRGRR (158 aa). The N-linked (GlcNAc...) asparagine glycan is linked to N71. Intrachain disulfides connect C198/C205, C206/C269, C235/C300, and C239/C302.

The protein belongs to the TGF-beta family. Homodimer; disulfide-linked. Interacts with GFRAL and RET; ligand of GFRAL, which mediates GDF15 internalization and cellular signaling through interaction with RET via the formation of a 2:2:2 ternary complex composed of GDF15, GFRAL and RET. As to expression, detected in plasma (at protein level).

The protein resides in the secreted. Hormone produced in response to various stresses to confer information about those stresses to the brain, and trigger an aversive response, characterized by nausea and/or loss of appetite. The aversive response is both required to reduce continuing exposure to those stresses at the time of exposure and to promote avoidance behavior in the future. Acts by binding to its receptor, GFRAL, activating GFRAL-expressing neurons localized in the area postrema and nucleus tractus solitarius of the brainstem. It then triggers the activation of neurons localized within the parabrachial nucleus and central amygdala, which constitutes part of the 'emergency circuit' that shapes responses to stressful conditions. The GDF15-GFRAL signal induces expression of genes involved in metabolism, such as lipid metabolism in adipose tissues. Contributes to the effect of metformin, an anti-diabetic drug, on appetite reduction and weight loss: produced in the kidney in response to metformin treatment, thereby activating the GDF15-GFRAL response, leading to reduced appetite and weight. Required for avoidance behavior in response to food allergens: induced downstream of mast cell activation to promote aversion and minimize harmful effects of exposure to noxious substances. Produced in response to anticancer drugs, such as camptothecin or cisplatin, promoting nausea and contributing to malnutrition. Overproduced in many cancers, promoting anorexia in cancer (cachexia). Responsible for the risk of nausea during pregnancy: high levels of GDF15 during pregnancy, mostly originating from embryos, are associated with increased nausea. Maternal sensitivity to nausea is probably determined by pre-pregnancy exposure to GDF15, females with naturally high level of GDF15 being less susceptible to nausea than female rats with low levels of GDF15 before pregnancy. Promotes metabolic adaptation in response to systemic inflammation caused by bacterial and viral infections in order to promote tissue tolerance and prevent tissue damage. Required for tissue tolerance in response to myocardial infarction by acting as an inhibitor of leukocyte integring activation, thereby protecting against cardiac rupture. Inhibits growth hormone signaling on hepatocytes. The protein is Growth/differentiation factor 15 of Rattus norvegicus (Rat).